A 311-amino-acid chain; its full sequence is RRSASDAELSAGAEGATGSEAAPPGDLGGRTRGGGRGSAAAAATTSTREAEGAERRGDTPARKPDPEAGRMDHHQLGTGRYQVLHNEEDNSESSAVEQPSTSSLAAPTVEAAASAPALDPDSPPPYSSITVEAPTTSDTDVYSEFYPVPPPYSVATSLPTYDEAEKAKAAALAAAAADAPQRNQEEDCTPRDDFSDVEQLRVGNDGIFMLAFFMAFIFNWLGFCLSFCITNTIAGRYGAICGFGLSLIKWILIVRFSDYFTGYFNGQYWLWWIFLVLGLLLFFRGFVNYLKVRNMSESMAAAHRTRYFFLL.

Positions 1–133 (RRSASDAELS…PPYSSITVEA (133 aa)) are disordered. The Cytoplasmic portion of the chain corresponds to 1–206 (RRSASDAELS…VEQLRVGNDG (206 aa)). Low complexity predominate over residues 7–22 (AELSAGAEGATGSEAA). Positions 26 to 37 (DLGGRTRGGGRG) are enriched in gly residues. The span at 38 to 47 (SAAAAATTST) shows a compositional bias: low complexity. A compositionally biased stretch (basic and acidic residues) spans 48–75 (REAEGAERRGDTPARKPDPEAGRMDHHQ). The span at 92–101 (ESSAVEQPST) shows a compositional bias: polar residues. The segment covering 102-120 (SSLAAPTVEAAASAPALDP) has biased composition (low complexity). The interval 123-126 (PPPY) is interaction with NEDD4. The short motif at 123–126 (PPPY) is the PPxY motif 1 element. A phosphotyrosine; by SRC mark is found at tyrosine 126, tyrosine 142, tyrosine 146, and tyrosine 152. Short sequence motifs (PPxY motif) lie at residues 149-152 (PPPY) and 159-161 (PTY). The chain crosses the membrane as a helical span at residues 207 to 227 (IFMLAFFMAFIFNWLGFCLSF). Residues 228–232 (CITNT) lie on the Extracellular side of the membrane. The chain crosses the membrane as a helical span at residues 233-253 (IAGRYGAICGFGLSLIKWILI). The Cytoplasmic segment spans residues 254–262 (VRFSDYFTG). A helical membrane pass occupies residues 263-283 (YFNGQYWLWWIFLVLGLLLFF). Residues 284–311 (RGFVNYLKVRNMSESMAAAHRTRYFFLL) are Extracellular-facing.

As to quaternary structure, forms heterodimers with NDFIP1. Interacts with HECT domain-containing E3 ubiquitin-protein ligases, including NEDD4. Interacts with NEDD4L. When phosphorylated at Tyr-142, interacts with SRC and LYN SH2 domain. May thus act as a scaffold that recruits SRC to NDFIP1, enhancing NDFIP1 phosphorylation. Interacts with SLC11A2/DMT1. May interact with phosphorylated EGFR. Interacts with KCNH2. Ubiquitinated by NEDD4 and NEDD4L; which does not affect turnover. Also ubiquitinated by ITCH. Post-translationally, undergoes transient tyrosine-phosphorylation following EGF stimulation, most probably catalyzed by SRC. Phosphorylation on Tyr-126, Tyr-146 and Tyr-152 are dependent on the phosphorylation on Tyr-142. Also phosphorylated by LYN and FYN. As to expression, ubiquitously expressed, with highest levels in brain, liver, kidney and testis.

Its subcellular location is the endosome membrane. It is found in the golgi apparatus membrane. It localises to the endosome. The protein resides in the multivesicular body membrane. Its function is as follows. Activates HECT domain-containing E3 ubiquitin-protein ligases, including ITCH, NEDD4, NEDD4L, SMURF2, WWP1 and WWP2, and consequently modulates the stability of their targets. As a result, may control many cellular processes. Recruits ITCH, NEDD4 and SMURF2 to endosomal membranes. Negatively regulates KCNH2 potassium channel activity by decreasing its cell-surface expression and interfering with channel maturation through recruitment of NEDD4L to the Golgi apparatus and multivesicular body where it mediates KCNH2 degradation. May modulate EGFR signaling. Together with NDFIP1, limits the cytokine signaling and expansion of effector Th2 T-cells by promoting degradation of JAK1, probably by ITCH- and NEDD4L-mediated ubiquitination. This chain is NEDD4 family-interacting protein 2 (Ndfip2), found in Mus musculus (Mouse).